The chain runs to 557 residues: UvrABC system protein C (557 aa).

The region spanning 14–89 (EEPGVYIFKN…IKKYRPKYNV (76 aa)) is the GIY-YIG domain. In terms of domain architecture, UVR spans 194-229 (EEVFDYLKEKMETHSKMLDFENAAKYRDLLLNLSNV).

The protein belongs to the UvrC family. As to quaternary structure, interacts with UvrB in an incision complex.

It localises to the cytoplasm. Functionally, the UvrABC repair system catalyzes the recognition and processing of DNA lesions. UvrC both incises the 5' and 3' sides of the lesion. The N-terminal half is responsible for the 3' incision and the C-terminal half is responsible for the 5' incision. This is UvrABC system protein C from Thermotoga maritima (strain ATCC 43589 / DSM 3109 / JCM 10099 / NBRC 100826 / MSB8).